We begin with the raw amino-acid sequence, 210 residues long: Uridine kinase (210 aa).

Residue 12–19 (GGSGGGKT) coordinates ATP.

It belongs to the uridine kinase family.

The protein localises to the cytoplasm. The catalysed reaction is uridine + ATP = UMP + ADP + H(+). It carries out the reaction cytidine + ATP = CMP + ADP + H(+). It participates in pyrimidine metabolism; CTP biosynthesis via salvage pathway; CTP from cytidine: step 1/3. It functions in the pathway pyrimidine metabolism; UMP biosynthesis via salvage pathway; UMP from uridine: step 1/1. In Streptococcus gordonii (strain Challis / ATCC 35105 / BCRC 15272 / CH1 / DL1 / V288), this protein is Uridine kinase.